A 374-amino-acid polypeptide reads, in one-letter code: Zinc finger CCCH domain-containing protein 15 homolog (374 aa).

C3H1-type zinc fingers lie at residues 89 to 116 (DPKSLLCVFFKQGLCGKGAKCKFSHDLA) and 167 to 197 (YFLEAVENNKYGWFWECPNGGDKCQYRHCLP).

It belongs to the ZC3H15/TMA46 family.

This is Zinc finger CCCH domain-containing protein 15 homolog from Caenorhabditis briggsae.